Reading from the N-terminus, the 247-residue chain is Cell division protein ZapD (247 aa).

It belongs to the ZapD family. In terms of assembly, interacts with FtsZ.

Its subcellular location is the cytoplasm. In terms of biological role, cell division factor that enhances FtsZ-ring assembly. Directly interacts with FtsZ and promotes bundling of FtsZ protofilaments, with a reduction in FtsZ GTPase activity. This Shigella boydii serotype 18 (strain CDC 3083-94 / BS512) protein is Cell division protein ZapD.